The sequence spans 405 residues: tRNA (uracil(54)-C(5))-methyltransferase (405 aa).

The [4Fe-4S] cluster site is built by Cys-61, Cys-67, Cys-70, and Cys-137. S-adenosyl-L-methionine-binding positions include Gln-252, Tyr-278, Thr-283, 299–300 (DS), Asp-326, and Asp-340. The active-site Nucleophile is the Cys-367. Glu-399 (proton acceptor) is an active-site residue.

This sequence belongs to the class I-like SAM-binding methyltransferase superfamily. RNA M5U methyltransferase family.

The catalysed reaction is uridine(54) in tRNA + S-adenosyl-L-methionine = 5-methyluridine(54) in tRNA + S-adenosyl-L-homocysteine + H(+). With respect to regulation, activated by magnesium ions. Functionally, catalyzes the formation of 5-methyl-uridine at position 54 (m5U54) in tRNA. The sequence is that of tRNA (uracil(54)-C(5))-methyltransferase from Pyrococcus abyssi (strain GE5 / Orsay).